The chain runs to 300 residues: Ribosomal protein L11 methyltransferase (300 aa).

The S-adenosyl-L-methionine site is built by threonine 148, glycine 171, aspartate 193, and asparagine 235.

This sequence belongs to the methyltransferase superfamily. PrmA family.

It is found in the cytoplasm. The catalysed reaction is L-lysyl-[protein] + 3 S-adenosyl-L-methionine = N(6),N(6),N(6)-trimethyl-L-lysyl-[protein] + 3 S-adenosyl-L-homocysteine + 3 H(+). Methylates ribosomal protein L11. The chain is Ribosomal protein L11 methyltransferase from Desulfotalea psychrophila (strain LSv54 / DSM 12343).